Reading from the N-terminus, the 967-residue chain is Importin-alpha re-exporter (967 aa).

An Importin N-terminal domain is found at 20–95; that stretch reads AEEALKVWEL…KREIINLMLK (76 aa).

This sequence belongs to the XPO2/CSE1 family. Binds with high affinity to importin-alpha only in the presence of RanGTP.

Its subcellular location is the cytoplasm. The protein localises to the nucleus envelope. Functionally, export receptor for importin alpha. Mediates importin-alpha re-export from the nucleus to the cytoplasm after import substrates have been released into the nucleoplasm. In Schizosaccharomyces pombe (strain 972 / ATCC 24843) (Fission yeast), this protein is Importin-alpha re-exporter (kap109).